A 264-amino-acid chain; its full sequence is tRNA pseudouridine synthase A (264 aa).

The active-site Nucleophile is the Asp52. Position 110 (Tyr110) interacts with substrate.

Belongs to the tRNA pseudouridine synthase TruA family. Homodimer.

The catalysed reaction is uridine(38/39/40) in tRNA = pseudouridine(38/39/40) in tRNA. Functionally, formation of pseudouridine at positions 38, 39 and 40 in the anticodon stem and loop of transfer RNAs. This Wigglesworthia glossinidia brevipalpis protein is tRNA pseudouridine synthase A.